A 4660-amino-acid polypeptide reads, in one-letter code: MERGAAAAAWMLLLAIAACLEPVSSQECGSGNFRCDNGYCIPASWRCDGTRDCLDDTDEIGCPPRSCESGLFLCPAEGTCIPSSWVCDEDKDCSDGADEQQNCAGTTCSAQQMTCSNGQCIPSEYRCDHVSDCPDGSDERNCHYPTCDQLTCANGACYNTSQRCDQKVDCRDSSDEANCTTLCSQKEFECGSGECILRAYVCDHDNDCEDNSDERNCNYDTCGGHQFTCSNGQCINQNWVCDGDDDCQDSGDEDGCESNQSHHRCYPREWACPGSGRCISIDKVCDGVPDCPEGDDENNVTSGRTCGMGVCSVLNCEYQCHQTPFGGECFCPPGHIINSNDSRTCIDFDDCQIWGICDQKCENRQGRHQCLCEEGYILERGQHCKSSDSFSAASVIFSNGRDLLVGDLHGRNFRILAESKNRGMVMGVDFHYQKHRVFWTDPMQEKVFSTDINGLNTQEILNVSVDTPENLAVDWINNKLYLVETKVNRIDVVNLEGNQRVTLITENLGHPRGIALDPTVGYLFFSDWGSLSGQPKVERAFMDGSNRKDLVTTKVGWPAGITLDLVSKRVYWVDSRYDYIETVTYDGIQRKTVARGGSLVPHPFGISLFEEHVFFTDWTKMAVMKASKFTETNPQVYHQSSLRPHGVTVYHALRQPNATNPCGSNNGGCAQVCVLSHRTDNGGLGYRCKCEFGFELDDDEHRCVAVKNFLLFSSKTAVRGIPFTLSTQEDVMVPVTGSPSFFVGIDFDAQHSTVFYSDLSKDIIYKQKIDGTGKEVITANRLESVECLTFDWISRNLYWTDGGLKSVTVLRLADKSRRQIISNLNNPRSIVVHPTAGYMFLSDWFRPAKIMRAWSDGSHLMPIVNTSLGWPNGLAIDWSASRLYWVDAFFDKIEHSTLDGLDRKRLGHVDQMTHPFGLTVFKDNVFITDWRLGAIIRVRKSDGGDMTVIRRGISSVMHVKAYDADLQTGSNYCSQTTHANGDCSHFCFPVPNFQRVCGCPYGMKLQRDQMTCEGDPAREPPTQQCGSLSFPCNNGKCVPSFFRCDGVDDCHDNSDEHQCGVFNNTCSPSAFACVRGGQCIPGQWHCDRQNDCLDGSDEQNCPTHATSSTCPSTSFTCDNHVCIPKDWVCDTDNDCSDGSDEKNCQASGTCQPTQFRCPDHRCISPLYVCDGDKDCADGSDEAGCVLNCTSAQFKCADGSSCINSRYRCDGVYDCRDNSDEAGCPTRPPGMCHPDEFQCQGDGTCIPNTWECDGHPDCIHGSDEHTGCVPKTCSPTHFLCDNGNCIYKAWICDGDNDCRDMSDEKDCPTQPFHCPSTQWQCPGYSTCINLSALCDGVFDCPNGTDESPLCNQDSCSHFNGGCTHQCMQGPFGATCLCPLGYQLANDTKTCEDINECDIPGFCSQHCVNMRGSFRCACDPEYTLESDGRTCKVTGSENPLLVVASRDKIIVDNITAHTHNLYSLVQDVSFVVALDFDSVTGRVFWSDLLQGKTWSVFQNGTDKRVVHDSGLSVTEMIAVDWIGRNLYWTDYALETIEVSKIDGSHRTVLISKNVTKPRGLALDPRMGDNVMFWSDWGHHPRIERASMDGTMRTVIVQEKIYWPCGLSIDYPNRLIYFMDAYLDYIEFCDYDGHNRRQVIASDLVLHHPHALTLFEDFVYWTDRGTRQVMQANKWHGGNQSVVMYSVHQPLGITAIHPSRQPPSRNPCASASCSHLCLLSAQAPRHYSCACPSGWNLSDDSVNCVRGDQPFLMSVRDNIIFGISLDPEVKSNDAMVPISGIQHGYDVEFDDSEQFIYWVENPGEIHRVKTDGSNRTVFAPLSLLGSSLGLALDWVSRNIYYTTPASRSIEVLTLKGDTRYGKTLIANDGTPLGVGFPVGIAVDPARGKLYWSDHGTDSGVPAKIASANMDGTSLKILFTGNLQHLEVVTLDIQEQKLYWAVTSRGVIERGNVDGTERMILVHHLAHPWGLVVYGSFLYYSDEQYEVIERVDKSSGNNKVVLRDNVPYLRGLRVYHRRNAADSSNGCSNNPNACQQICLPVPGGMFSCACASGFKLSPDGRSCSPYNSFMVVSMLPAVRGFSLELSDHSEAMVPVAGQGRNVLHADVDVANGFIYWCDFSSSVRSSNGIRRIKPDGSNFTNVVTYGIGANGIRGVALDWAAGNLYFTNAFVYETLIEVLRINTTYRRVLLKVSVDMPRHIIVDPKHRYLFWADYGQKPKIERSFLDCTNRTVLVSEGIVTPRGLAMDHDTGYIYWVDDSLDLIARIHLDGGESQVVRYGSRYPTPYGITVFGESIIWVDRNLKKVFQASKQPGNTDPPVVIRDKINLLRDVTIFDEHAQPLSPAELNNNPCLQSNGGCSHFCFALPELPTPRCGCAFGTLGNDGKSCATSQEDFLIYSLNNSLRSLHFDPRDHSLPFQVISVAGTAIALDYDRRNNRIFFTQKLNSLRGQISYVSLYSGSSSPTVLLSNIGVTDGIAFDWINRRIYYSDFSNQTINSMAEDGSNRAVIARVSKPRAIVLDPCRGYMYWTDWGTNAKIERATLGGNFRVPIVNTSLVWPNGLALDLETDLLYWADASLQKIERSTLTGTNREVVVSTAFHSFGLTVYGQYIYWTDLYTRKIYRANKYDGSDLVAMTTRLPTQPSGISTVVKTQRQQCSNPCDQFNGGCSHICAPGPNGAECQCPHEGNWYLANDNKYCVVDTGTRCNQLQFTCLNGHCINQDWKCDNDNDCGDGSDELPTVCAFHTCRSTAFTCGNGRCVPYHYRCDYYNDCGDNSDEAGCLFRNCNSTTEFTCSNGRCIPLSYVCNGINNCHDNDTSDEKNCPPHTCPPDFTKCQTTNICVPRAFLCDGDNDCGDGSDENPIYCASHTCRSNEFQCLSPQRCIPSYWFCDGEADCADGSDEPDTCGHSVNTCRASQFQCDNGRCISGNWVCDGDNDCGDMSDEDQRHHCELQNCSSTQFTCVNSRPPNRRCIPQYWVCDGDADCSDALDELQNCTMRTCSAGEFSCANGRCVRQSFRCDRRNDCGDYSDERGCSYPPCHANQFTCQNGRCIPRFFVCDEDNDCGDGSDEQEHLCHTPEPTCPLHQFRCDNGHCIEMGRVCNHVDDCSDNSDEKGCGINECLDSSISRCDHNCTDTITSFYCSCLPGYKLMSDKRSCVDIDECKESPQLCSQKCENVVGSYICKCAPGYIREPDGKSCRQNSNIEPYLIFSNRYYIRNLTTDGSSYSLILQGLGNVVALDFDRVEKRLYWIDAEKQIIERMFLNKTNRETIINHRLRRAESLAVDWVSRKLYWLDAILDCLFVSDLEGRHRKMIAQHCVDANNTFCFEHPRGIVLHPQRGHVYWADWGVHAYIGRIGMDGTNKSVIISTKIEWPNAITIDYTNDLLYWADAHLGYIEFSDLEGHHRHTVYDGSLPHPFALTIFEDTVFWTDWNTRTVEKGNKYDGSGRVVLVNTTHKPFDIHVYHPYRQPIMSNPCGTNNGGCSHLCLIKAGGRGFTCACPDDFQTVQLRDRTLCMPMCSSTQFLCGNNEKCIPIWWKCDGQKDCSDGSDEPDLCPHRFCRLGQFQCRDGNCTSPQALCNARQDCADGSDEDRVLCEHHRCESNEWQCANKRCIPQSWQCDSVNDCLDNSDEDTSHCASRTCRPGQFKCNNGRCIPQSWKCDVDNDCGDYSDEPIDECTTAAYNCDNHTEFSCKTNYRCIPQWAVCNGFDDCRDNSDEQGCESVPCHPSGDFRCANHHCIPLRWKCDGTDDCGDNSDEENCVPRECSESEFRCADQQCIPSRWVCDQENDCGDNSDERDCEMKTCHPEHFQCTSGHCVPKALACDGRADCLDASDESACPTRFPNGTYCPAAMFECKNHVCIQSFWICDGENDCVDGSDEEIHLCFNIPCESPQRFRCDNSRCVYGHQLCNGVDDCGDGSDEKEEHCRKPTHKPCTDTEYKCSNGNCISQHYVCDNVNDCGDLSDETGCNLGDNRTCAENICEQNCTQLSSGGFICSCRPGFKPSTSDKNSCQDINECEEFGICPQSCRNSKGSYECFCVDGFKSMSTHYGERCAADGSPPLLLLPENVRIRKYNTSSEKFSEYLEEEEHIQTIDYDWDPEHIGLSVVYYTVLAQGSQFGAIKRAYIPNFESGSNNPIREVDLGLKYLMQPDGLAVDWVGRHIYWSDAKSQRIEVATLDGRYRKWLITTQLDQPAAIAVNPKLGLMFWTDQGKQPKIESAWMNGEHRSVLVSENLGWPNGLSIDYLNDDRVYWSDSKEDVIEAIKYDGTDRRLIINEAMKPFSLDIFEDKLYWVAKEKGEVWRQNKFGKENKEKVLVVNPWLTQVRIFHQLRYNQSVSNPCKQVCSHLCLLRPGGYSCACPQGSDFVTGSTVQCDAASELPVTMPPPCRCMHGGNCYFDENELPKCKCSSGYSGEYCEVGLSRGIPPGTTMAVLLTFVIVIIVGALVLVGLFHYRKTGSLLPTLPKLPSLSSLAKPSENGNGVTFRSGADVNMDIGVSPFGPETIIDRSMAMNEHFVMEVGKQPVIFENPMYAAKDNTSKVALAVQGPSTGAQVTVPENVENQNYGRPIDPSEIVPEPKPASPGADEIQGKKWNIFKRKPKQTTNFENPIYAEMDSEVKDAVAVAPPPSPSLPAKASKRNLTPGYTATEDTFKDTANLVKEDSDV.

Residues 1 to 25 (MERGAAAAAWMLLLAIAACLEPVSS) form the signal peptide. Topologically, residues 26-4425 (QECGSGNFRC…LSRGIPPGTT (4400 aa)) are extracellular. LDL-receptor class A domains lie at 27–63 (ECGS…IGCP), 66–104 (SCES…QNCA), 107–143 (TCSA…RNCH), 141–180 (NCHY…ANCT), 182–218 (LCSQ…RNCN), and 221–257 (TCGG…DGCE). 18 cysteine pairs are disulfide-bonded: Cys-28-Cys-40, Cys-35-Cys-53, Cys-47-Cys-62, Cys-67-Cys-80, Cys-74-Cys-93, Cys-87-Cys-103, Cys-108-Cys-120, Cys-115-Cys-133, Cys-127-Cys-142, Cys-142-Cys-157, Cys-152-Cys-170, Cys-164-Cys-179, Cys-183-Cys-195, Cys-190-Cys-208, Cys-202-Cys-217, Cys-222-Cys-234, Cys-229-Cys-247, and Cys-241-Cys-256. N-linked (GlcNAc...) asparagine glycans are attached at residues Asn-159 and Asn-178. Residue Asn-259 is glycosylated (N-linked (GlcNAc...) asparagine). Positions 264–307 (RCYPREWACPGSGRCISIDKVCDGVPDCPEGDDENNVTSGRTCG) constitute an LDL-receptor class A 7 domain. 3 disulfides stabilise this stretch: Cys-265–Cys-278, Cys-272–Cys-291, and Cys-285–Cys-306. Asn-299 and Asn-340 each carry an N-linked (GlcNAc...) asparagine glycan. An EGF-like 1; calcium-binding domain is found at 347-382 (DFDDCQIWGICDQKCENRQGRHQCLCEEGYILERGQ). 2 disulfides stabilise this stretch: Cys-351-Cys-361 and Cys-357-Cys-370. LDL-receptor class B repeat units lie at residues 435-477 (HRVF…DWIN), 478-520 (NKLY…DPTV), 521-567 (GYLF…DLVS), and 568-612 (KRVY…FEEH). N-linked (GlcNAc...) asparagine glycosylation is present at Asn-462. N-linked (GlcNAc...) asparagine glycosylation occurs at Asn-657. 4 LDL-receptor class B repeats span residues 752–794 (STVF…DWIS), 795–836 (RNLY…HPTA), 837–880 (GYMF…DWSA), and 881–924 (SRLY…FKDN). The N-linked (GlcNAc...) asparagine glycan is linked to Asn-865. In terms of domain architecture, LDL-receptor class A 8 spans 1024–1060 (QCGSLSFPCNNGKCVPSFFRCDGVDDCHDNSDEHQCG). 3 disulfide bridges follow: Cys-1025-Cys-1037, Cys-1032-Cys-1050, and Cys-1044-Cys-1059. Asn-1063 carries N-linked (GlcNAc...) asparagine glycosylation. 7 consecutive LDL-receptor class A domains span residues 1065 to 1102 (TCSP…QNCP), 1109 to 1145 (TCPS…KNCQ), 1149 to 1185 (TCQP…AGCV), 1187 to 1224 (NCTS…AGCP), 1230 to 1268 (MCHP…TGCV), 1271 to 1307 (TCSP…KDCP), and 1312 to 1350 (HCPS…PLCN). Intrachain disulfides connect Cys-1066-Cys-1079, Cys-1073-Cys-1092, Cys-1086-Cys-1101, Cys-1110-Cys-1122, Cys-1117-Cys-1135, Cys-1129-Cys-1144, Cys-1150-Cys-1162, Cys-1157-Cys-1175, and Cys-1169-Cys-1184. Positions 1127, 1130, 1132, 1134, 1140, and 1141 each coordinate Ca(2+). An N-linked (GlcNAc...) asparagine glycan is attached at Asn-1187. Disulfide bonds link Cys-1188–Cys-1201, Cys-1195–Cys-1214, Cys-1208–Cys-1223, Cys-1231–Cys-1244, Cys-1238–Cys-1257, Cys-1251–Cys-1267, Cys-1272–Cys-1284, Cys-1279–Cys-1297, Cys-1291–Cys-1306, Cys-1313–Cys-1326, Cys-1320–Cys-1339, Cys-1333–Cys-1349, Cys-1354–Cys-1365, Cys-1361–Cys-1374, Cys-1376–Cys-1389, Cys-1395–Cys-1405, Cys-1401–Cys-1414, and Cys-1416–Cys-1429. Tyr-1206, Asp-1209, Val-1211, Asp-1213, Asp-1219, and Glu-1220 together coordinate Ca(2+). N-linked (GlcNAc...) asparagine glycosylation is found at Asn-1328 and Asn-1341. Residues 1350–1390 (NQDSCSHFNGGCTHQCMQGPFGATCLCPLGYQLANDTKTCE) enclose the EGF-like 2 domain. Asn-1384 carries N-linked (GlcNAc...) asparagine glycosylation. The 40-residue stretch at 1391 to 1430 (DINECDIPGFCSQHCVNMRGSFRCACDPEYTLESDGRTCK) folds into the EGF-like 3; calcium-binding domain. N-linked (GlcNAc...) asparagine glycosylation is found at Asn-1451, Asn-1497, and Asn-1551. 5 LDL-receptor class B repeats span residues 1479-1521 (GRVF…DWIG), 1522-1564 (RNLY…DPRM), 1567-1610 (NVMF…DYPN), 1611-1655 (RLIY…FEDF), and 1656-1696 (VYWT…IHPS). N-linked (GlcNAc...) asparagine glycosylation is found at Asn-1676, Asn-1733, and Asn-1811. LDL-receptor class B repeat units follow at residues 1791–1833 (QFIY…DWVS), 1834–1883 (RNIY…DPAR), 1884–1931 (GKLY…DIQE), 1932–1973 (QKLY…YGSF), 1974–2014 (LYYS…YHRR), 2108–2157 (GFIY…DWAA), 2158–2202 (GNLY…DPKH), 2203–2246 (RYLF…DHDT), and 2247–2290 (GYIY…FGES). N-linked (GlcNAc...) asparagine glycans are attached at residues Asn-2134, Asn-2178, and Asn-2225. Asn-2396 carries N-linked (GlcNAc...) asparagine glycosylation. LDL-receptor class B repeat units lie at residues 2432–2478 (NRIF…DWIN), 2479–2519 (RRIY…DPCR), 2520–2563 (GYMY…DLET), 2564–2605 (DLLY…YGQY), and 2606–2647 (IYWT…VVKT). N-linked (GlcNAc...) asparagine glycosylation is found at Asn-2488 and Asn-2548. 10 LDL-receptor class A domains span residues 2700-2738 (RCNQ…TVCA), 2741-2777 (TCRS…AGCL), 2780-2819 (NCNS…KNCP), 2822-2861 (TCPP…IYCA), 2864-2902 (TCRS…DTCG), 2907-2946 (TCRA…HHCE), 2949-2991 (NCSS…QNCT), 2994-3030 (TCSA…RGCS), 3033-3071 (PCHA…HLCH), and 3076-3112 (TCPL…KGCG). Cystine bridges form between Cys-2701–Cys-2713, Cys-2708–Cys-2726, Cys-2720–Cys-2737, Cys-2742–Cys-2754, Cys-2749–Cys-2767, Cys-2761–Cys-2776, Cys-2781–Cys-2794, Cys-2789–Cys-2807, Cys-2801–Cys-2818, Cys-2823–Cys-2836, Cys-2830–Cys-2849, Cys-2843–Cys-2860, Cys-2865–Cys-2878, Cys-2872–Cys-2891, Cys-2885–Cys-2901, Cys-2908–Cys-2920, Cys-2915–Cys-2933, and Cys-2927–Cys-2945. Asn-2782 carries N-linked (GlcNAc...) asparagine glycosylation. An N-linked (GlcNAc...) asparagine glycan is attached at Asn-2810. N-linked (GlcNAc...) asparagine glycosylation is present at Asn-2949. Cystine bridges form between Cys-2950-Cys-2967, Cys-2957-Cys-2980, Cys-2974-Cys-2990, Cys-2995-Cys-3007, Cys-3002-Cys-3020, Cys-3014-Cys-3029, Cys-3034-Cys-3046, Cys-3041-Cys-3059, Cys-3053-Cys-3070, Cys-3077-Cys-3089, Cys-3084-Cys-3102, Cys-3096-Cys-3111, Cys-3116-Cys-3128, Cys-3124-Cys-3137, Cys-3139-Cys-3152, Cys-3158-Cys-3169, Cys-3165-Cys-3178, and Cys-3180-Cys-3193. Asn-2989 carries an N-linked (GlcNAc...) asparagine glycan. The region spanning 3112-3153 (GINECLDSSISRCDHNCTDTITSFYCSCLPGYKLMSDKRSCV) is the EGF-like 4 domain. The N-linked (GlcNAc...) asparagine glycan is linked to Asn-3127. In terms of domain architecture, EGF-like 5; calcium-binding spans 3154 to 3194 (DIDECKESPQLCSQKCENVVGSYICKCAPGYIREPDGKSCR). Residues Asn-3213, Asn-3259, Asn-3317, and Asn-3357 are each glycosylated (N-linked (GlcNAc...) asparagine). 5 LDL-receptor class B repeats span residues 3241 to 3283 (KRLY…DWVS), 3284 to 3326 (RKLY…EHPR), 3335 to 3378 (GHVY…DYTN), 3379 to 3421 (DLLY…FEDT), and 3422 to 3462 (VFWT…YHPY). Residue Asn-3448 is glycosylated (N-linked (GlcNAc...) asparagine). 8 LDL-receptor class A domains span residues 3513-3551 (MCSS…DLCP), 3554-3592 (FCRL…VLCE), 3595-3633 (RCES…SHCA), 3636-3674 (TCRP…DECT), 3679-3717 (NCDN…QGCE), 3720-3757 (PCHP…ENCV), 3760-3796 (ECSE…RDCE), and 3799-3835 (TCHP…SACP). 24 cysteine pairs are disulfide-bonded: Cys-3514-Cys-3527, Cys-3521-Cys-3540, Cys-3534-Cys-3550, Cys-3555-Cys-3567, Cys-3562-Cys-3580, Cys-3574-Cys-3591, Cys-3596-Cys-3608, Cys-3603-Cys-3621, Cys-3615-Cys-3632, Cys-3637-Cys-3649, Cys-3644-Cys-3662, Cys-3656-Cys-3673, Cys-3680-Cys-3694, Cys-3688-Cys-3707, Cys-3701-Cys-3716, Cys-3721-Cys-3734, Cys-3729-Cys-3747, Cys-3741-Cys-3756, Cys-3761-Cys-3773, Cys-3768-Cys-3786, Cys-3780-Cys-3795, Cys-3800-Cys-3812, Cys-3807-Cys-3825, and Cys-3819-Cys-3834. N-linked (GlcNAc...) asparagine glycosylation occurs at Asn-3566. N-linked (GlcNAc...) asparagine glycosylation is present at Asn-3682. Asn-3840 carries an N-linked (GlcNAc...) asparagine glycan. LDL-receptor class A domains are found at residues 3843 to 3881 (YCPA…HLCF), 3884 to 3923 (PCES…EHCR), and 3929 to 3965 (PCTD…TGCN). 9 cysteine pairs are disulfide-bonded: Cys-3844/Cys-3856, Cys-3851/Cys-3869, Cys-3863/Cys-3880, Cys-3885/Cys-3898, Cys-3893/Cys-3911, Cys-3905/Cys-3922, Cys-3930/Cys-3942, Cys-3937/Cys-3955, and Cys-3949/Cys-3964. An EGF-like 6 domain is found at 3968–4003 (DNRTCAENICEQNCTQLSSGGFICSCRPGFKPSTSD). 2 N-linked (GlcNAc...) asparagine glycosylation sites follow: Asn-3969 and Asn-3980. Intrachain disulfides connect Cys-3972-Cys-3981, Cys-3977-Cys-3991, Cys-4013-Cys-4023, Cys-4019-Cys-4032, and Cys-4034-Cys-4049. The EGF-like 7; calcium-binding domain maps to 4009-4050 (DINECEEFGICPQSCRNSKGSYECFCVDGFKSMSTHYGERCA). Asn-4070 carries an N-linked (GlcNAc...) asparagine glycan. LDL-receptor class B repeat units follow at residues 4156-4198 (RHIY…NPKL), 4199-4242 (GLMF…DYLN), and 4244-4285 (DRVY…FEDK). Residue Asn-4329 is glycosylated (N-linked (GlcNAc...) asparagine). Residues 4379–4413 (MPPPCRCMHGGNCYFDENELPKCKCSSGYSGEYCE) enclose the EGF-like 8 domain. Intrachain disulfides connect Cys-4383/Cys-4391, Cys-4385/Cys-4401, and Cys-4403/Cys-4412. The chain crosses the membrane as a helical span at residues 4426 to 4446 (MAVLLTFVIVIIVGALVLVGL). The Cytoplasmic portion of the chain corresponds to 4447 to 4660 (FHYRKTGSLL…ANLVKEDSDV (214 aa)). The short motif at 4454–4463 (SLLPTLPKLP) is the SH3-binding element. Positions 4457–4462 (PTLPKL) match the PxLPxI/L motif 1; mediates interaction with ANKRA2 motif. The PxLPxI/L motif 2; mediates interaction with ANKRA2 signature appears at 4460–4465 (PKLPSL). Residues Ser-4464 and Ser-4467 each carry the phosphoserine modification. Positions 4522 to 4527 (FENPMY) match the Endocytosis signal motif. The tract at residues 4559–4582 (NYGRPIDPSEIVPEPKPASPGADE) is disordered. Ser-4577 is modified (phosphoserine). Residues 4597 to 4610 (QTTNFENPIYAEMD) form an interaction with DAB2 region. An NPXY motif motif is present at residues 4603-4606 (NPIY). The SH2-binding motif lies at 4606-4609 (YAEM). The interval 4617-4660 (VAVAPPPSPSLPAKASKRNLTPGYTATEDTFKDTANLVKEDSDV) is disordered. An SH3-binding motif is present at residues 4619-4630 (VAPPPSPSLPAK). A Phosphoserine modification is found at Ser-4624. The span at 4634 to 4644 (RNLTPGYTATE) shows a compositional bias: polar residues. Thr-4637 is modified (phosphothreonine). Phosphoserine is present on Ser-4658.

Belongs to the LDLR family. In terms of assembly, binds plasminogen, extracellular matrix components, plasminogen activator-plasminogen activator inhibitor type I complex, apolipoprotein E-enriched beta-VLDL, lipoprotein lipase, lactoferrin, CLU/clusterin and calcium. Forms a multimeric complex together with LRPAP1. Interacts (via PxLPxI/L motif) with ANKRA2 (via ankyrin repeats). Interacts with LRP2BP. Interacts (via NPXY motif) with DAB2; the interaction is not affected by tyrosine phosphorylation of the NPXY motif. Interacts with MB. Interacts with BMP4. Interacts with the Sonic hedgehog protein N-product which is the active product of SHH. Interacts with CST3 in a calcium-dependent manner. Interacts with the vitamin-D binding protein GC/DBP. Interacts with sex hormone-binding protein SHBG. Interacts with angiotensin-2. Also interacts with angiotensin 1-7. Interacts with APOM. Interacts with selenoprotein SEPP1. Interacts with LEP. Interacts with ALB. Interacts with the antiapoptotic protein BIRC5/survivin. Interacts with matrix metalloproteinase MMP2 in complex with metalloproteinase inhibitor TIMP1. In neurons, forms a trimeric complex with APP and APPB1/FE65. Interacts with LDLRAP1/ARH; mediates trafficking of LRP2 to the endocytic recycling compartment. Does not interact with beta-amyloid protein 40 alone but interacts with the complex composed of beta-amyloid protein 40 and CLU/APOJ. Interacts with MDK. In terms of processing, a fraction undergoes proteolytic cleavage of the extracellular domain at the cell membrane to generate a cytoplasmic tail fragment. This is internalized into the early endosome from where it trafficks in an LDLRAP1/ARH-dependent manner to the endocytic recycling compartment (ERC). In the ERC, it is further cleaved by gamma-secretase to release a fragment which translocates to the nucleus and mediates transcriptional repression. Post-translationally, N-glycosylation is required for ligand binding. In the inner ear, expressed in the lumen of the endolymphatic sac where it localizes to macrophage-like cells as well as to mitochondria-rich and ribosome-rich epithelial cells (at protein level). In the inner ear, expressed in marginal cells of the stria vascularis, epithelial cells at the spiral prominence, epithelial cells of Reissner's membrane facing the cochlear duct, and Kolliker's organ (at protein level). Expressed in the choroid plexus epithelium in the brain (at protein level). In the brain, also expressed in astrocytes (at protein level). Expression also detected in epithelial cells of the kidney glomerulus and proximal tubule, lung, epididymis and yolk sac.

Its subcellular location is the apical cell membrane. It is found in the endosome lumen. The protein resides in the membrane. The protein localises to the clathrin-coated pit. It localises to the cell projection. Its subcellular location is the dendrite. It is found in the axon. Multiligand endocytic receptor. Acts together with CUBN to mediate endocytosis of high-density lipoproteins. Mediates receptor-mediated uptake of polybasic drugs such as aprotinin, aminoglycosides and polymyxin B. In the kidney, mediates the tubular uptake and clearance of leptin. Also mediates transport of leptin across the blood-brain barrier through endocytosis at the choroid plexus epithelium. Endocytosis of leptin in neuronal cells is required for hypothalamic leptin signaling and leptin-mediated regulation of feeding and body weight. Mediates endocytosis and subsequent lysosomal degradation of CST3 in kidney proximal tubule cells. Mediates renal uptake of 25-hydroxyvitamin D3 in complex with the vitamin D3 transporter GC/DBP. Mediates renal uptake of metallothionein-bound heavy metals. Together with CUBN, mediates renal reabsorption of myoglobin. Mediates renal uptake and subsequent lysosomal degradation of APOM. Plays a role in kidney selenium homeostasis by mediating renal endocytosis of selenoprotein SEPP1. Mediates renal uptake of the antiapoptotic protein BIRC5/survivin which may be important for functional integrity of the kidney. Mediates renal uptake of matrix metalloproteinase MMP2 in complex with metalloproteinase inhibitor TIMP1. Mediates endocytosis of Sonic hedgehog protein N-product (ShhN), the active product of SHH. Also mediates ShhN transcytosis. In the embryonic neuroepithelium, mediates endocytic uptake and degradation of BMP4, is required for correct SHH localization in the ventral neural tube and plays a role in patterning of the ventral telencephalon. Required at the onset of neurulation to sequester SHH on the apical surface of neuroepithelial cells of the rostral diencephalon ventral midline and to control PTCH1-dependent uptake and intracellular trafficking of SHH. During neurulation, required in neuroepithelial cells for uptake of folate bound to the folate receptor FOLR1 which is necessary for neural tube closure. In the adult brain, negatively regulates BMP signaling in the subependymal zone which enables neurogenesis to proceed. In astrocytes, mediates endocytosis of ALB which is required for the synthesis of the neurotrophic factor oleic acid. Involved in neurite branching. During optic nerve development, required for SHH-mediated migration and proliferation of oligodendrocyte precursor cells. Mediates endocytic uptake and clearance of SHH in the retinal margin which protects retinal progenitor cells from mitogenic stimuli and keeps them quiescent. Plays a role in reproductive organ development by mediating uptake in reproductive tissues of androgen and estrogen bound to the sex hormone binding protein SHBG. Mediates endocytosis of angiotensin-2. Also mediates endocytosis of angiotensin 1-7. Binds to the complex composed of beta-amyloid protein 40 and CLU/APOJ and mediates its endocytosis and lysosomal degradation. Required for embryonic heart development. Required for normal hearing, possibly through interaction with estrogen in the inner ear. This chain is Low-density lipoprotein receptor-related protein 2 (Lrp2), found in Rattus norvegicus (Rat).